Here is a 624-residue protein sequence, read N- to C-terminus: Chaperone protein DnaK (624 aa).

Thr-174 carries the post-translational modification Phosphothreonine; by autocatalysis. 2 disordered regions span residues 544–563 and 576–624; these read KKAQQENNLDDMKQKRDDLS and NAQK…DDKK. Over residues 581-600 the composition is skewed to low complexity; the sequence is QQAQGGPASGAATDAGAAQG. Over residues 601-624 the composition is skewed to basic and acidic residues; that stretch reads SDDKKSDDDTINGDYKDVSDDDKK.

The protein belongs to the heat shock protein 70 family.

Its function is as follows. Acts as a chaperone. This is Chaperone protein DnaK from Lacticaseibacillus casei (strain BL23) (Lactobacillus casei).